Consider the following 263-residue polypeptide: Diphthine synthase (263 aa).

S-adenosyl-L-methionine contacts are provided by residues leucine 11, aspartate 89, alanine 92, 117-118 (SV), leucine 166, and leucine 208.

Belongs to the diphthine synthase family. Homodimer.

The enzyme catalyses 2-[(3S)-amino-3-carboxypropyl]-L-histidyl-[translation elongation factor 2] + 3 S-adenosyl-L-methionine = diphthine-[translation elongation factor 2] + 3 S-adenosyl-L-homocysteine + 3 H(+). The protein operates within protein modification; peptidyl-diphthamide biosynthesis. Functionally, S-adenosyl-L-methionine-dependent methyltransferase that catalyzes the trimethylation of the amino group of the modified target histidine residue in translation elongation factor 2 (EF-2), to form an intermediate called diphthine. The three successive methylation reactions represent the second step of diphthamide biosynthesis. This Methanopyrus kandleri (strain AV19 / DSM 6324 / JCM 9639 / NBRC 100938) protein is Diphthine synthase.